The primary structure comprises 595 residues: Inactive serine/threonine-protein kinase PLK5 (595 aa).

A Protein kinase domain is found at 27-279 (YRRGKLIGKG…LDHLLQDDFF (253 aa)). ATP contacts are provided by residues 33-41 (IGKGAFSRC) and Lys-56. Asp-150 serves as the catalytic Proton acceptor. The disordered stretch occupies residues 326–350 (FTSKEASGPGEEGTEPDHMEAGNEE). Positions 340 to 350 (EPDHMEAGNEE) are enriched in basic and acidic residues. POLO box domains follow at residues 413–491 (WAPK…YMQR) and 509–595 (DISL…LQSV).

Belongs to the protein kinase superfamily. Ser/Thr protein kinase family. CDC5/Polo subfamily. As to expression, expressed in the cerebellum, eye and brain cortex (at protein level). Expressed in highly differentiated tissues, such as brain, eyes and ovary. Not detectable in proliferating tissues, such as the colon, spleen and placenta.

The protein localises to the nucleus. The protein resides in the nucleolus. Its subcellular location is the cytoplasm. Functionally, inactive serine/threonine-protein kinase that plays a role in cell cycle progression and neuronal differentiation. The protein is Inactive serine/threonine-protein kinase PLK5 of Mus musculus (Mouse).